The sequence spans 174 residues: UPF0340 protein SAB1998c (174 aa).

The protein belongs to the UPF0340 family.

This is UPF0340 protein SAB1998c from Staphylococcus aureus (strain bovine RF122 / ET3-1).